Reading from the N-terminus, the 545-residue chain is Baeyer-Villiger monooxygenase (545 aa).

6 residues coordinate FAD: Phe-24, Asp-45, Trp-54, Asp-65, Tyr-71, and Val-118.

It belongs to the FAD-binding monooxygenase family. FAD serves as cofactor.

Functionally, catalyzes a Baeyer-Villiger oxidation reaction, i.e. the insertion of an oxygen atom into a carbon-carbon bond adjacent to a carbonyl, which converts ketones to esters or lactones using NADPH as an electron donor. Besides cycloalkanones, can use cyclic alpha,beta-unsaturated ketones as substrates, leading to conjugated ene-lactones. Can also act on methylated cycloalkanones and methylated cycloalkenones with high enantioselectivity in some cases. This chain is Baeyer-Villiger monooxygenase, found in Pseudooceanicola batsensis (strain ATCC BAA-863 / DSM 15984 / KCTC 12145 / HTCC2597) (Oceanicola batsensis).